We begin with the raw amino-acid sequence, 318 residues long: Ubiquitin-like domain-containing CTD phosphatase 1 (318 aa).

Residues 3-81 enclose the Ubiquitin-like domain; that stretch reads LSLIIKWGGQ…IMMMGTREES (79 aa). Residues 133-294 form the FCP1 homology domain; that stretch reads PREGKKLLVL…LKLTQYLKEI (162 aa). D143, D145, and D253 together coordinate Mg(2+).

The cofactor is Mg(2+).

Its subcellular location is the nucleus. It catalyses the reaction O-phospho-L-seryl-[protein] + H2O = L-seryl-[protein] + phosphate. The enzyme catalyses O-phospho-L-threonyl-[protein] + H2O = L-threonyl-[protein] + phosphate. Dephosphorylates 26S nuclear proteasomes, thereby decreasing their proteolytic activity. Recruited to the 19S regulatory particle of the 26S proteasome where it dephosphorylates 19S component PSMC2 which impairs PSMC2 ATPase activity and disrupts 26S proteasome assembly. Has also been reported to stimulate the proteolytic activity of the 26S proteasome. The protein is Ubiquitin-like domain-containing CTD phosphatase 1 (UBLCP1) of Gallus gallus (Chicken).